The following is a 101-amino-acid chain: Small ribosomal subunit protein uS14 (101 aa).

Belongs to the universal ribosomal protein uS14 family. As to quaternary structure, part of the 30S ribosomal subunit. Contacts proteins S3 and S10.

Binds 16S rRNA, required for the assembly of 30S particles and may also be responsible for determining the conformation of the 16S rRNA at the A site. The polypeptide is Small ribosomal subunit protein uS14 (Nitrosomonas europaea (strain ATCC 19718 / CIP 103999 / KCTC 2705 / NBRC 14298)).